Reading from the N-terminus, the 469-residue chain is Sulfate adenylyltransferase subunit 1 (469 aa).

Positions 22-237 constitute a tr-type G domain; the sequence is KEVLRFITCG…LEEVPVKSEE (216 aa). The G1 stretch occupies residues 31 to 38; sequence GSVDDGKS. 31-38 contributes to the GTP binding site; it reads GSVDDGKS. Positions 89-93 are G2; the sequence is GITID. Residues 110-113 form a G3 region; it reads DTPG. GTP is bound by residues 110–114 and 165–168; these read DTPGH and NKMD. Residues 165–168 form a G4 region; that stretch reads NKMD. The segment at 202–204 is G5; it reads SAK.

Belongs to the TRAFAC class translation factor GTPase superfamily. Classic translation factor GTPase family. CysN/NodQ subfamily. Heterodimer composed of CysD, the smaller subunit, and CysN.

It carries out the reaction sulfate + ATP + H(+) = adenosine 5'-phosphosulfate + diphosphate. Its pathway is sulfur metabolism; hydrogen sulfide biosynthesis; sulfite from sulfate: step 1/3. In terms of biological role, with CysD forms the ATP sulfurylase (ATPS) that catalyzes the adenylation of sulfate producing adenosine 5'-phosphosulfate (APS) and diphosphate, the first enzymatic step in sulfur assimilation pathway. APS synthesis involves the formation of a high-energy phosphoric-sulfuric acid anhydride bond driven by GTP hydrolysis by CysN coupled to ATP hydrolysis by CysD. This is Sulfate adenylyltransferase subunit 1 from Methylorubrum extorquens (strain CM4 / NCIMB 13688) (Methylobacterium extorquens).